The chain runs to 128 residues: uncharacterized protein (128 aa).

In terms of domain architecture, HTH hxlR-type spans 18-116 (CPVETTLDII…WGEKYKDRID (99 aa)).

This is an uncharacterized protein from Bacillus subtilis (strain 168).